Consider the following 385-residue polypeptide: Chorismate synthase (385 aa).

The disordered stretch occupies residues 43–63; the sequence is PDLDRRRPGTSRHVTQRNEPD. Arginine 48 and arginine 54 together coordinate NADP(+). FMN-binding positions include 125 to 127, 238 to 239, glycine 278, 293 to 297, and arginine 319; these read RSS, NA, and KPTSS. Low complexity predominate over residues 363-372; it reads AQAPRTETAP. The segment at 363-385 is disordered; it reads AQAPRTETAPATPPLDAGDDIEA.

The protein belongs to the chorismate synthase family. Homotetramer. It depends on FMNH2 as a cofactor.

It carries out the reaction 5-O-(1-carboxyvinyl)-3-phosphoshikimate = chorismate + phosphate. The protein operates within metabolic intermediate biosynthesis; chorismate biosynthesis; chorismate from D-erythrose 4-phosphate and phosphoenolpyruvate: step 7/7. Its function is as follows. Catalyzes the anti-1,4-elimination of the C-3 phosphate and the C-6 proR hydrogen from 5-enolpyruvylshikimate-3-phosphate (EPSP) to yield chorismate, which is the branch point compound that serves as the starting substrate for the three terminal pathways of aromatic amino acid biosynthesis. This reaction introduces a second double bond into the aromatic ring system. This Leptothrix cholodnii (strain ATCC 51168 / LMG 8142 / SP-6) (Leptothrix discophora (strain SP-6)) protein is Chorismate synthase.